Reading from the N-terminus, the 249-residue chain is 5'-nucleotidase SurE (249 aa).

A divalent metal cation contacts are provided by Asp8, Asp9, Ser39, and Asn91.

Belongs to the SurE nucleotidase family. The cofactor is a divalent metal cation.

It is found in the cytoplasm. The catalysed reaction is a ribonucleoside 5'-phosphate + H2O = a ribonucleoside + phosphate. In terms of biological role, nucleotidase that shows phosphatase activity on nucleoside 5'-monophosphates. This chain is 5'-nucleotidase SurE, found in Haemophilus influenzae (strain ATCC 51907 / DSM 11121 / KW20 / Rd).